A 502-amino-acid polypeptide reads, in one-letter code: ATP synthase subunit alpha (502 aa).

169–176 (GDRQTGKT) contributes to the ATP binding site.

Belongs to the ATPase alpha/beta chains family. In terms of assembly, F-type ATPases have 2 components, CF(1) - the catalytic core - and CF(0) - the membrane proton channel. CF(1) has five subunits: alpha(3), beta(3), gamma(1), delta(1), epsilon(1). CF(0) has three main subunits: a(1), b(2) and c(9-12). The alpha and beta chains form an alternating ring which encloses part of the gamma chain. CF(1) is attached to CF(0) by a central stalk formed by the gamma and epsilon chains, while a peripheral stalk is formed by the delta and b chains.

It localises to the cell inner membrane. The enzyme catalyses ATP + H2O + 4 H(+)(in) = ADP + phosphate + 5 H(+)(out). In terms of biological role, produces ATP from ADP in the presence of a proton gradient across the membrane. The alpha chain is a regulatory subunit. This is ATP synthase subunit alpha from Nitratidesulfovibrio vulgaris (strain ATCC 29579 / DSM 644 / CCUG 34227 / NCIMB 8303 / VKM B-1760 / Hildenborough) (Desulfovibrio vulgaris).